Here is a 394-residue protein sequence, read N- to C-terminus: MVTIETRADQMVLNLGPHHPSTHGVLRLIVTLDGENVVDCRPVLGYLHRGMEKIGENRTIIQYLPYCSRWDYAAAMMNEAPVVNAPEAMAGVKVPRRASYIRVIMLELSRIANHLLWVGPFLLDMGAQSPFFYILRERELILDLFEAATGLRMVGNNYFRVGGVTVDLPYGWVDKAHDLCDVIPGKIDEYERLITNNPIFRRRIENLGYISREDAINWGLSGPMLRASGVKWDLRKVDHYEIYDELDWDIAWDTGGDCLARYIVRIKEMRESVKIIRQALDQLPGGPYEQLEARRLAEGPKSEWNSFDYQFIGKKSSPTFKIPTGEYYARSEEAKGELGIYVVGRDDTTPWRWKIRTPDFANLAILPMILQGTKVADLVVVLGSIDIIMGSVDR.

The protein belongs to the complex I 49 kDa subunit family. As to quaternary structure, NDH-1 can be composed of about 15 different subunits; different subcomplexes with different compositions have been identified which probably have different functions.

The protein resides in the cell inner membrane. The catalysed reaction is a plastoquinone + NADH + (n+1) H(+)(in) = a plastoquinol + NAD(+) + n H(+)(out). It carries out the reaction a plastoquinone + NADPH + (n+1) H(+)(in) = a plastoquinol + NADP(+) + n H(+)(out). In terms of biological role, NDH-1 shuttles electrons from an unknown electron donor, via FMN and iron-sulfur (Fe-S) centers, to quinones in the respiratory and/or the photosynthetic chain. The immediate electron acceptor for the enzyme in this species is believed to be plastoquinone. Couples the redox reaction to proton translocation, and thus conserves the redox energy in a proton gradient. Cyanobacterial NDH-1 also plays a role in inorganic carbon-concentration. The protein is NAD(P)H-quinone oxidoreductase subunit H 2 of Gloeobacter violaceus (strain ATCC 29082 / PCC 7421).